The sequence spans 157 residues: MDKLKKVLSGQDTEDRSGLSEVVESSSLSWSTRIKGFIVCFALGILCSLLGTLLLWVSRKGLFAVFYTLGNITSIGSTMFLMGPLKQLKRMFEPTRLIATILVLLFFVLTLCSAFLWNKGLALIFCILQSLALTWYSLSYIPYARDAVKKCFAVCLT.

Met1 carries the post-translational modification N-acetylmethionine. Topologically, residues 1–36 are cytoplasmic; that stretch reads MDKLKKVLSGQDTEDRSGLSEVVESSSLSWSTRIKG. Ser9 is subject to Phosphoserine. A helical membrane pass occupies residues 37–57; sequence FIVCFALGILCSLLGTLLLWV. Over 58–61 the chain is Lumenal; sequence SRKG. Residues 62 to 82 form a helical membrane-spanning segment; that stretch reads LFAVFYTLGNITSIGSTMFLM. The Cytoplasmic segment spans residues 83-96; that stretch reads GPLKQLKRMFEPTR. A helical transmembrane segment spans residues 97-117; it reads LIATILVLLFFVLTLCSAFLW. Residues 118–120 are Lumenal-facing; that stretch reads NKG. A helical transmembrane segment spans residues 121–141; sequence LALIFCILQSLALTWYSLSYI. Over 142 to 157 the chain is Cytoplasmic; the sequence is PYARDAVKKCFAVCLT.

Belongs to the SFT2 family.

Its subcellular location is the membrane. In terms of biological role, may be involved in fusion of retrograde transport vesicles derived from an endocytic compartment with the Golgi complex. This is Vesicle transport protein SFT2B from Rattus norvegicus (Rat).